A 275-amino-acid polypeptide reads, in one-letter code: Gamma carbonic anhydrase 1, mitochondrial (275 aa).

Residues 1–43 constitute a mitochondrion transit peptide; sequence MGTLGRAFYSVGFWIRETGQALDRLGCRLQGKNYFREQLSRHR. Residues 86-88 and 101-102 contribute to the substrate site; these read RGD and QD. Residues His-107, His-130, and His-135 each contribute to the Zn(2+) site. Asn-209 contributes to the substrate binding site. A disordered region spans residues 256–275; the sequence is LNLPNNILPDKETKRPSNVN. Residues 264–275 show a composition bias toward basic and acidic residues; that stretch reads PDKETKRPSNVN.

The protein belongs to the gamma-class carbonic anhydrase family. As to quaternary structure, homotrimer. Component of the mitochondrial oxidoreductase respiratory chain complex I; element of the extra matrix-exposed domain, which is attached to the membrane arm of this complex. Zn(2+) is required as a cofactor.

The protein resides in the mitochondrion membrane. Enzyme involved in the catabolism of H(2)CO(3) but that does not mediates the reversible hydration of carbon dioxide. Mediates complex I assembly in mitochondria and respiration. The polypeptide is Gamma carbonic anhydrase 1, mitochondrial (GAMMACA1) (Arabidopsis thaliana (Mouse-ear cress)).